Here is a 117-residue protein sequence, read N- to C-terminus: uncharacterized protein (117 aa).

Positions 16–56 (FSQSSDGRSNGGGSSSGDSVSTTSDGLLTTGTSPNTSSTSL) are disordered. Residues 31 to 56 (SGDSVSTTSDGLLTTGTSPNTSSTSL) show a composition bias toward low complexity.

This is an uncharacterized protein from Saccharomyces cerevisiae (strain ATCC 204508 / S288c) (Baker's yeast).